A 1129-amino-acid polypeptide reads, in one-letter code: Phytochrome A type 3 (1129 aa).

The segment covering 1-21 (MSSSRPASSSSSRNRQSSQAR) has biased composition (low complexity). Residues 1–24 (MSSSRPASSSSSRNRQSSQARVLA) are disordered. The region spanning 217 to 402 (SMEVLCNTVV…VFAVHVNREF (186 aa)) is the GAF domain. Cys322 provides a ligand contact to phytochromobilin. 2 consecutive PAS domains span residues 618 to 688 (VTSE…LQGK) and 748 to 822 (VEGD…VSLC). Residues 902–1122 (YMRHAINNPL…TFIITAELAS (221 aa)) form the Histidine kinase domain.

This sequence belongs to the phytochrome family. In terms of assembly, homodimer. In terms of processing, contains one covalently linked phytochromobilin chromophore.

In terms of biological role, regulatory photoreceptor which exists in two forms that are reversibly interconvertible by light: the Pr form that absorbs maximally in the red region of the spectrum and the Pfr form that absorbs maximally in the far-red region. Photoconversion of Pr to Pfr induces an array of morphogenic responses, whereas reconversion of Pfr to Pr cancels the induction of those responses. Pfr controls the expression of a number of nuclear genes including those encoding the small subunit of ribulose-bisphosphate carboxylase, chlorophyll A/B binding protein, protochlorophyllide reductase, rRNA, etc. It also controls the expression of its own gene(s) in a negative feedback fashion. The chain is Phytochrome A type 3 (PHYA3) from Avena sativa (Oat).